The chain runs to 140 residues: Tumor protein D55 (140 aa).

The interval 1-28 (MPHARTETSVGTYESHSTSELEDLTEPE) is disordered. The segment covering 7-18 (ETSVGTYESHST) has biased composition (polar residues). The stretch at 28 to 57 (EQRELKTKLTKLEAEIVTLRHVLAAKERRC) forms a coiled coil.

The protein belongs to the TPD52 family. Interacts with TPD52L2. In terms of tissue distribution, specifically expressed in testis. Expressed at 5.6-fold higher levels in adult testis than in fetal testis.

The sequence is that of Tumor protein D55 (TPD52L3) from Homo sapiens (Human).